The chain runs to 261 residues: MSRRRQIYEGKAKILYEGPEPGTLIQYFKDDATAFNAQKRGTINGKGVINNRISEYVFTRLAHIGIPTHFIRRLNMREQLVRQAEIIPIEVVVRNIAAGSISKRLGIEEGEPLPHTLIEYYYKDDALGDPMIAEEHIACFGWASNEEMQDISSMAIRVNDFLCGMFAAINISLVDFKLEFGRIWDGDYSRVILADEISPDGCRLWDMTTGEKLDKDRFRRDLGGEEEAYQEVARRLGLLENDGGPSEVFDLGAHRKLRGKK.

This sequence belongs to the SAICAR synthetase family.

The enzyme catalyses 5-amino-1-(5-phospho-D-ribosyl)imidazole-4-carboxylate + L-aspartate + ATP = (2S)-2-[5-amino-1-(5-phospho-beta-D-ribosyl)imidazole-4-carboxamido]succinate + ADP + phosphate + 2 H(+). The protein operates within purine metabolism; IMP biosynthesis via de novo pathway; 5-amino-1-(5-phospho-D-ribosyl)imidazole-4-carboxamide from 5-amino-1-(5-phospho-D-ribosyl)imidazole-4-carboxylate: step 1/2. The protein is Phosphoribosylaminoimidazole-succinocarboxamide synthase of Novosphingobium aromaticivorans (strain ATCC 700278 / DSM 12444 / CCUG 56034 / CIP 105152 / NBRC 16084 / F199).